The chain runs to 216 residues: MGQKVNPEGLRLGIVKTWQSRWYADKEYADFILEDFKLREFVKKKLHHAGIAKVEIERSLNRIRLRIFAARPGIVIGKKGNEIEQLKNEIRQKVVAGKDLAIDIQEVKKPETVAQLVAENVAGQLERRVAFRRAMKRGVSSAMRFGVKGIKIICSGRLGGAEMARREWYREGRVPLHTLRADVDYGFVEASTTYGRIGVKVFIFKGEVLKDERKKN.

The region spanning 38–108 (LREFVKKKLH…DLAIDIQEVK (71 aa)) is the KH type-2 domain.

The protein belongs to the universal ribosomal protein uS3 family. As to quaternary structure, part of the 30S ribosomal subunit. Forms a tight complex with proteins S10 and S14.

Functionally, binds the lower part of the 30S subunit head. Binds mRNA in the 70S ribosome, positioning it for translation. The polypeptide is Small ribosomal subunit protein uS3 (Desulfosudis oleivorans (strain DSM 6200 / JCM 39069 / Hxd3) (Desulfococcus oleovorans)).